Consider the following 235-residue polypeptide: 2-C-methyl-D-erythritol 4-phosphate cytidylyltransferase (235 aa).

This sequence belongs to the IspD/TarI cytidylyltransferase family. IspD subfamily. As to quaternary structure, homodimer.

The enzyme catalyses 2-C-methyl-D-erythritol 4-phosphate + CTP + H(+) = 4-CDP-2-C-methyl-D-erythritol + diphosphate. The protein operates within isoprenoid biosynthesis; isopentenyl diphosphate biosynthesis via DXP pathway; isopentenyl diphosphate from 1-deoxy-D-xylulose 5-phosphate: step 2/6. Catalyzes the formation of 4-diphosphocytidyl-2-C-methyl-D-erythritol from CTP and 2-C-methyl-D-erythritol 4-phosphate (MEP). In Blochmanniella pennsylvanica (strain BPEN), this protein is 2-C-methyl-D-erythritol 4-phosphate cytidylyltransferase.